A 396-amino-acid chain; its full sequence is Phosphoglycerate kinase (396 aa).

Residues 21–23 (DFN), Arg-37, 60–63 (HLGR), Arg-121, and Arg-154 contribute to the substrate site. Residues Lys-205, Gly-296, Glu-327, and 353 to 356 (GGDS) each bind ATP.

Belongs to the phosphoglycerate kinase family. Monomer.

It localises to the cytoplasm. The enzyme catalyses (2R)-3-phosphoglycerate + ATP = (2R)-3-phospho-glyceroyl phosphate + ADP. The protein operates within carbohydrate degradation; glycolysis; pyruvate from D-glyceraldehyde 3-phosphate: step 2/5. The chain is Phosphoglycerate kinase from Anaeromyxobacter dehalogenans (strain 2CP-1 / ATCC BAA-258).